The chain runs to 151 residues: UPF0756 membrane protein GTNG_2661 (151 aa).

The next 4 helical transmembrane spans lie at 5–25 (VLFLLLLLAIGVIAKNQSLII), 53–73 (WGVTVITVAVLAPIATGEIGF), 86–106 (WIALLFGIFVALIAKGGVMLL), and 116–136 (LVLGTVIAVSLFHGVAVGPLI).

It belongs to the UPF0756 family.

The protein localises to the cell membrane. The sequence is that of UPF0756 membrane protein GTNG_2661 from Geobacillus thermodenitrificans (strain NG80-2).